A 317-amino-acid chain; its full sequence is tRNA pseudouridine synthase B (317 aa).

Residue Asp47 is the Nucleophile of the active site.

This sequence belongs to the pseudouridine synthase TruB family. Type 1 subfamily.

It carries out the reaction uridine(55) in tRNA = pseudouridine(55) in tRNA. In terms of biological role, responsible for synthesis of pseudouridine from uracil-55 in the psi GC loop of transfer RNAs. This is tRNA pseudouridine synthase B from Shewanella sp. (strain MR-7).